The sequence spans 362 residues: Uroporphyrinogen decarboxylase (362 aa).

Substrate is bound by residues 39 to 43 (RQAGR), Asp88, Tyr165, Thr220, and His334.

This sequence belongs to the uroporphyrinogen decarboxylase family. Homodimer.

It is found in the cytoplasm. It catalyses the reaction uroporphyrinogen III + 4 H(+) = coproporphyrinogen III + 4 CO2. It functions in the pathway porphyrin-containing compound metabolism; protoporphyrin-IX biosynthesis; coproporphyrinogen-III from 5-aminolevulinate: step 4/4. Functionally, catalyzes the decarboxylation of four acetate groups of uroporphyrinogen-III to yield coproporphyrinogen-III. The chain is Uroporphyrinogen decarboxylase from Synechococcus sp. (strain JA-3-3Ab) (Cyanobacteria bacterium Yellowstone A-Prime).